The sequence spans 81 residues: Acylphosphatase (81 aa).

Residues 1–81 (MYIFHGRVQG…VKYNDFQIRY (81 aa)) form the Acylphosphatase-like domain. Active-site residues include Arg-14 and Asn-32.

This sequence belongs to the acylphosphatase family.

It catalyses the reaction an acyl phosphate + H2O = a carboxylate + phosphate + H(+). The chain is Acylphosphatase (acyP) from Picrophilus torridus (strain ATCC 700027 / DSM 9790 / JCM 10055 / NBRC 100828 / KAW 2/3).